Here is a 624-residue protein sequence, read N- to C-terminus: Polycomb group protein EMF2A (624 aa).

Residues 338-359 (CPFCLVRCGNFKGLECHMTSSH) form a C2H2-type zinc finger. A disordered region spans residues 420 to 445 (DAHIMESGSPEETQAESEDDVQEENE). The segment covering 432 to 445 (TQAESEDDVQEENE) has biased composition (acidic residues). The tract at residues 474 to 609 (LSANRADPRN…SARTMDTCNR (136 aa)) is VEFS-box.

The protein belongs to the VEFS (VRN2-EMF2-FIS2-SU(Z)12) family. As to quaternary structure, component of the polycomb repressive complex 2 (PRC2), which methylates 'Lys-27' residues of histone H3 (H3K27me3), leading to transcriptional repression of the affected target gene. Widely expressed. Highly expressed in shoot apical meristem and inflorescence meristem. Expressed in roots, leaves and immature seeds.

Functionally, polycomb group (PcG) protein. PcG proteins act by forming multiprotein complexes, which are required to maintain the transcriptionally repressive state of homeotic genes throughout development. PcG proteins are not required to initiate repression, but to maintain it during later stages of development. They act via the methylation of histones, rendering chromatin heritably changed in its expressibility. This Oryza sativa subsp. japonica (Rice) protein is Polycomb group protein EMF2A.